A 197-amino-acid polypeptide reads, in one-letter code: Nucleoid occlusion factor SlmA (197 aa).

The region spanning 7–67 (INRREHILQC…GLIEFIEESL (61 aa)) is the HTH tetR-type domain. The H-T-H motif DNA-binding region spans 30 to 49 (TTAKLASEVGVSEAALYRHF). The stretch at 110–130 (ALLGENERLRSRISSLFAKIE) forms a coiled coil.

This sequence belongs to the nucleoid occlusion factor SlmA family. In terms of assembly, homodimer. Interacts with FtsZ.

The protein localises to the cytoplasm. It is found in the nucleoid. In terms of biological role, required for nucleoid occlusion (NO) phenomenon, which prevents Z-ring formation and cell division over the nucleoid. Acts as a DNA-associated cell division inhibitor that binds simultaneously chromosomal DNA and FtsZ, and disrupts the assembly of FtsZ polymers. SlmA-DNA-binding sequences (SBS) are dispersed on non-Ter regions of the chromosome, preventing FtsZ polymerization at these regions. This Shewanella sp. (strain W3-18-1) protein is Nucleoid occlusion factor SlmA.